A 289-amino-acid chain; its full sequence is (3R)-3-[(carboxymethyl)amino]fatty acid oxygenase/decarboxylase (289 aa).

3 residues coordinate a (3R)-3-[(carboxymethyl)amino]fatty acid: Y65, Y70, and G93. Residues H97 and D99 each coordinate Fe(2+). Positions 100 and 158 each coordinate a (3R)-3-[(carboxymethyl)amino]fatty acid. H260 lines the Fe(2+) pocket. H264 provides a ligand contact to 2-oxoglutarate. Position 275 (R275) interacts with a (3R)-3-[(carboxymethyl)amino]fatty acid.

It belongs to the TfdA dioxygenase family. It depends on Fe(2+) as a cofactor.

The catalysed reaction is a (3R)-3-[(carboxymethyl)amino]fatty acid + 2 2-oxoglutarate + 2 O2 = a (3R)-3-isocyanyl-fatty acid + 2 succinate + 3 CO2 + 2 H2O. It catalyses the reaction a (3R)-3-[(carboxymethyl)amino]fatty acid + 2-oxoglutarate + O2 = a (3R)-3-{[carboxy(hydroxy)methyl]amino}fatty acid + succinate + CO2. The enzyme catalyses a (3R)-3-{[carboxy(hydroxy)methyl]amino}fatty acid + 2-oxoglutarate + O2 = a (3R)-3-isocyanyl-fatty acid + succinate + 2 CO2 + 2 H2O. In terms of biological role, involved in the biosynthesis of a unique class of isonitrile lipopeptides (INLPs) that seem to play a role in metal acquisition. Catalyzes the conversion of (3R)-3-[(carboxymethyl)amino]fatty acids to (3R)-3-isocyanyl-fatty acids through an oxidative decarboxylation mechanism, thereby generating the isonitrile group of INLPs. In Mycobacterium bovis (strain ATCC BAA-935 / AF2122/97), this protein is (3R)-3-[(carboxymethyl)amino]fatty acid oxygenase/decarboxylase.